The following is an 83-amino-acid chain: Small ribosomal subunit protein bS16 (83 aa).

It belongs to the bacterial ribosomal protein bS16 family.

In Syntrophus aciditrophicus (strain SB), this protein is Small ribosomal subunit protein bS16.